A 391-amino-acid polypeptide reads, in one-letter code: 8-amino-7-oxononanoate synthase (391 aa).

Residue R24 coordinates substrate. Position 112 to 113 (112 to 113) interacts with pyridoxal 5'-phosphate; sequence GY. H137 serves as a coordination point for substrate. Positions 183, 211, and 240 each coordinate pyridoxal 5'-phosphate. Residue K243 is modified to N6-(pyridoxal phosphate)lysine. Residue T357 coordinates substrate.

This sequence belongs to the class-II pyridoxal-phosphate-dependent aminotransferase family. BioF subfamily. Homodimer. Pyridoxal 5'-phosphate is required as a cofactor.

The enzyme catalyses 6-carboxyhexanoyl-[ACP] + L-alanine + H(+) = (8S)-8-amino-7-oxononanoate + holo-[ACP] + CO2. It participates in cofactor biosynthesis; biotin biosynthesis. In terms of biological role, catalyzes the decarboxylative condensation of pimeloyl-[acyl-carrier protein] and L-alanine to produce 8-amino-7-oxononanoate (AON), [acyl-carrier protein], and carbon dioxide. The sequence is that of 8-amino-7-oxononanoate synthase from Alkalilimnicola ehrlichii (strain ATCC BAA-1101 / DSM 17681 / MLHE-1).